Here is a 136-residue protein sequence, read N- to C-terminus: Large ribosomal subunit protein uL16 (136 aa).

The protein belongs to the universal ribosomal protein uL16 family. Part of the 50S ribosomal subunit.

Its function is as follows. Binds 23S rRNA and is also seen to make contacts with the A and possibly P site tRNAs. The sequence is that of Large ribosomal subunit protein uL16 from Vibrio campbellii (strain ATCC BAA-1116).